Consider the following 202-residue polypeptide: Dephospho-CoA kinase (202 aa).

In terms of domain architecture, DPCK spans 6 to 202 (KISVTGDPSS…QCFKALKGTI (197 aa)). 14–19 (SSGKTE) provides a ligand contact to ATP.

This sequence belongs to the CoaE family.

Its subcellular location is the cytoplasm. It carries out the reaction 3'-dephospho-CoA + ATP = ADP + CoA + H(+). It functions in the pathway cofactor biosynthesis; coenzyme A biosynthesis; CoA from (R)-pantothenate: step 5/5. In terms of biological role, catalyzes the phosphorylation of the 3'-hydroxyl group of dephosphocoenzyme A to form coenzyme A. The polypeptide is Dephospho-CoA kinase (Chlamydia muridarum (strain MoPn / Nigg)).